Here is a 475-residue protein sequence, read N- to C-terminus: MSTQRLRNEDYHDYSSTDVSPEESPSEGLGSFSPGSYQRLGENSSMTWFQTLIHLLKGNIGTGLLGLPLAVKNAGLLLGPLSLLVIGIVAVHCMGILVKCAHHLCRRLNKPFLDYGDTVMYGLECSPSTWIRNHSHWGRRIVDFFLVVTQLGFCCVYFVFLADNFKQVIEAANGTTTNCNNNETVILTPTMDSRLYMLTFLPFLVLLSFIRNLRILSIFSLLANISMFVSLIMIYQFIVQRIPDPSHLPLVAPWKTYPLFFGTAIFAFEGIGVVLPLENKMKDSQKFPLILYLGMAIITVLYISLGSLGYLQFGADIKGSITLNLPNCWLYQSVKLLYSIGIFFTYALQFYVAAEIIIPAIVSRVPERFELVVDLSARTAMVCVTCVLAVLIPRLDLVISLVGSVSSSALALIIPPLLEVTTYYGEGISPLTITKDALISILGFVGFVVGTYESLWELIQPSHSDSSTNSTSAFI.

Residues 1 to 15 show a composition bias toward basic and acidic residues; it reads MSTQRLRNEDYHDYS. The disordered stretch occupies residues 1-32; it reads MSTQRLRNEDYHDYSSTDVSPEESPSEGLGSF. The Cytoplasmic segment spans residues 1-50; that stretch reads MSTQRLRNEDYHDYSSTDVSPEESPSEGLGSFSPGSYQRLGENSSMTWFQ. A helical membrane pass occupies residues 51–71; that stretch reads TLIHLLKGNIGTGLLGLPLAV. Residues 72–77 lie on the Extracellular side of the membrane; the sequence is KNAGLL. Residues 78–98 traverse the membrane as a helical segment; sequence LGPLSLLVIGIVAVHCMGILV. Residues 99-140 lie on the Cytoplasmic side of the membrane; sequence KCAHHLCRRLNKPFLDYGDTVMYGLECSPSTWIRNHSHWGRR. The helical transmembrane segment at 141 to 161 threads the bilayer; sequence IVDFFLVVTQLGFCCVYFVFL. The Extracellular portion of the chain corresponds to 162–189; sequence ADNFKQVIEAANGTTTNCNNNETVILTP. N-linked (GlcNAc...) asparagine glycans are attached at residues Asn173 and Asn182. The cysteines at positions 179 and 328 are disulfide-linked. The chain crosses the membrane as a helical span at residues 190-210; that stretch reads TMDSRLYMLTFLPFLVLLSFI. Over 211–214 the chain is Cytoplasmic; that stretch reads RNLR. A helical transmembrane segment spans residues 215-235; it reads ILSIFSLLANISMFVSLIMIY. Topologically, residues 236 to 256 are extracellular; the sequence is QFIVQRIPDPSHLPLVAPWKT. Residues 257–277 traverse the membrane as a helical segment; the sequence is YPLFFGTAIFAFEGIGVVLPL. Residues 278 to 288 are Cytoplasmic-facing; it reads ENKMKDSQKFP. Residues 289–309 form a helical membrane-spanning segment; that stretch reads LILYLGMAIITVLYISLGSLG. Over 310–341 the chain is Extracellular; the sequence is YLQFGADIKGSITLNLPNCWLYQSVKLLYSIG. The helical transmembrane segment at 342-362 threads the bilayer; sequence IFFTYALQFYVAAEIIIPAIV. Over 363–371 the chain is Cytoplasmic; that stretch reads SRVPERFEL. Residues 372 to 392 traverse the membrane as a helical segment; sequence VVDLSARTAMVCVTCVLAVLI. The Extracellular portion of the chain corresponds to 393-396; the sequence is PRLD. The helical transmembrane segment at 397 to 417 threads the bilayer; that stretch reads LVISLVGSVSSSALALIIPPL. Topologically, residues 418-438 are cytoplasmic; the sequence is LEVTTYYGEGISPLTITKDAL. Residues 439-459 traverse the membrane as a helical segment; that stretch reads ISILGFVGFVVGTYESLWELI. Residues 460-475 lie on the Extracellular side of the membrane; that stretch reads QPSHSDSSTNSTSAFI. A glycan (N-linked (GlcNAc...) asparagine) is linked at Asn469.

It belongs to the amino acid/polyamine transporter 2 family. In terms of tissue distribution, widely expressed and predominantly expressed in brain. Within the brain, expression restricted to neurons and not detected in glial cells. Abundant in regions rich in neurons using glutamate and GABA such as Purkinje cells in the cerebellum and pyramidal cells in the hippocampus.

It is found in the cell membrane. Its subcellular location is the apical cell membrane. The protein localises to the lysosome membrane. It carries out the reaction glycine(in) + H(+)(in) = glycine(out) + H(+)(out). It catalyses the reaction L-proline(out) + H(+)(out) = L-proline(in) + H(+)(in). The enzyme catalyses D-proline(out) + H(+)(out) = D-proline(in) + H(+)(in). The catalysed reaction is L-alanine(in) + H(+)(in) = L-alanine(out) + H(+)(out). It carries out the reaction D-alanine(in) + H(+)(in) = D-alanine(out) + H(+)(out). It catalyses the reaction L-serine(in) + H(+)(in) = L-serine(out) + H(+)(out). The enzyme catalyses D-serine(out) + H(+)(out) = D-serine(in) + H(+)(in). The catalysed reaction is 4-aminobutanoate(in) + H(+)(in) = 4-aminobutanoate(out) + H(+)(out). It carries out the reaction beta-alanine(in) + H(+)(in) = beta-alanine(out) + H(+)(out). Functionally, electrogenic proton/amino acid symporter with selectivity for small apolar L-amino acids, their D-enantiomers and selected amino acid derivatives such as 4-aminobutanoate/GABA. May be involved in the efflux from the lysosomal compartment of neutral amino acids resulting from proteolysis. May play a role in specifying sites for exocytosis in neurons. This Rattus norvegicus (Rat) protein is Proton-coupled amino acid transporter 1.